The chain runs to 167 residues: MENIIEKIIYASRWLMFPVNIGLSFGFILLTLKFFQQIIFILPNILTMSESGLVLIVLSLIDIALVGGLLVMVMFSGYENFISKMDIKDDSKRLGWMGTMDVNSIKNKVASSIVAISSVHLLRLFMEAEKILDNKIILCVIIHLTFVLSAFGMAYIDKMSKKIKNKK.

A run of 3 helical transmembrane segments spans residues 15–35 (LMFPVNIGLSFGFILLTLKFF), 53–73 (LVLIVLSLIDIALVGGLLVMV), and 136–156 (IILCVIIHLTFVLSAFGMAYI).

The protein belongs to the UPF0114 family.

Its subcellular location is the cell membrane. This chain is UPF0114 protein in repA1-repA2 intergenic region, found in Buchnera aphidicola subsp. Pterocomma populeum.